A 338-amino-acid polypeptide reads, in one-letter code: MLTERQLLILQTIIDDFIGSAQPVGSRTLAKKDAITFSSATIRNEMADLEELGFIEKTHSSSGRVPSEKGYRFYVDHLLAPQNLPKDEIVQIKDLFAERIFEAEKIAQQSAQILSELTNYTAIVLGPKLSTNKLKNVQIVPLDRQTAVAIIVTDTGHVQSKTITVPESVDLSDLEKMVNILNEKLSGVPMSELHNKIFKEIVTVLRGYVHNYDSAIKMLDGTFQVPLSEKIYFGGKANMLSQPEFHDIHKVRSLLTMIDNEAEFYDILRHKQVGIQVKIGRENSATAMEDCSLISATYSIGEEQLGTIAILGPTRMQYSRVISLLQLFTRQFTDGLKK.

Belongs to the HrcA family.

Its function is as follows. Negative regulator of class I heat shock genes (grpE-dnaK-dnaJ and groELS operons). Prevents heat-shock induction of these operons. The chain is Heat-inducible transcription repressor HrcA from Bacillus cereus (strain 03BB102).